A 206-amino-acid chain; its full sequence is Small ribosomal subunit protein uS4 (206 aa).

Positions threonine 96–lysine 156 constitute an S4 RNA-binding domain.

Belongs to the universal ribosomal protein uS4 family. As to quaternary structure, part of the 30S ribosomal subunit. Contacts protein S5. The interaction surface between S4 and S5 is involved in control of translational fidelity.

Its function is as follows. One of the primary rRNA binding proteins, it binds directly to 16S rRNA where it nucleates assembly of the body of the 30S subunit. In terms of biological role, with S5 and S12 plays an important role in translational accuracy. The sequence is that of Small ribosomal subunit protein uS4 from Shewanella baltica (strain OS223).